A 292-amino-acid polypeptide reads, in one-letter code: MASSSVSSLQFLFVTSQTPSSLKPNSTLSFFSLPSSSLNLSLSSSSIGHSASIKPFESSFSTRVALSDFDQLEDDVEVAEQPRFSEDLKLFVGNLPFSVDSAALAGLFERAGNVEIVEVIYDKLSGRSRGFGFVTMSTKEEVEAAEQQFNGYEIDGRAIRVNAGPAPAKRENSSFGGGRGGNSSYGGGRDGNSSFGGARGGRSVDSSNRVYVGNLSWGVDDLALKELFSEQGNVVDAKVVYDRDSGRSRGFGFVTYSSAKEVNDAIDSLNGIDLDGRSIRVSAAEERPRRQF.

One can recognise an RRM 1 domain in the interval L88–A166. Positions P165–S203 are disordered. Positions P167–S207 are linker (Gly-rich). The span at F175–D190 shows a compositional bias: gly residues. The RRM 2 domain maps to N208–E286.

As to expression, expressed at high levels in the leaves and seedlings, and lower levels are seen in the stems and roots.

The protein localises to the plastid. It is found in the chloroplast. In Nicotiana plumbaginifolia (Leadwort-leaved tobacco), this protein is 31 kDa ribonucleoprotein, chloroplastic.